We begin with the raw amino-acid sequence, 868 residues long: DNA mismatch repair protein MutS (868 aa).

Position 620–627 (620–627 (GPNMGGKS)) interacts with ATP.

Belongs to the DNA mismatch repair MutS family.

Its function is as follows. This protein is involved in the repair of mismatches in DNA. It is possible that it carries out the mismatch recognition step. This protein has a weak ATPase activity. In Xylella fastidiosa (strain 9a5c), this protein is DNA mismatch repair protein MutS.